Here is a 408-residue protein sequence, read N- to C-terminus: Argininosuccinate synthase (408 aa).

ATP-binding positions include Ala-12–Ser-20 and Ala-39. L-citrulline-binding residues include Tyr-90 and Ser-95. Gly-120 is a binding site for ATP. The L-aspartate site is built by Thr-122, Asn-126, and Asp-127. Asn-126 contributes to the L-citrulline binding site. L-citrulline contacts are provided by Arg-130, Ser-181, Ser-190, Glu-266, and Tyr-278.

It belongs to the argininosuccinate synthase family. Type 1 subfamily. In terms of assembly, homotetramer.

It is found in the cytoplasm. The catalysed reaction is L-citrulline + L-aspartate + ATP = 2-(N(omega)-L-arginino)succinate + AMP + diphosphate + H(+). Its pathway is amino-acid biosynthesis; L-arginine biosynthesis; L-arginine from L-ornithine and carbamoyl phosphate: step 2/3. The polypeptide is Argininosuccinate synthase (Methylococcus capsulatus (strain ATCC 33009 / NCIMB 11132 / Bath)).